The primary structure comprises 459 residues: Eukaryotic translation initiation factor 3 subunit M (459 aa).

A PCI domain is found at 207-384 (LDWAQTHVVD…SEFLVHRATY (178 aa)). A disordered region spans residues 431-459 (AAAEGEKGDKNNKGPSERRRAPQEIAAAE). Positions 434 to 452 (EGEKGDKNNKGPSERRRAP) are enriched in basic and acidic residues.

This sequence belongs to the eIF-3 subunit M family. As to quaternary structure, component of the eukaryotic translation initiation factor 3 (eIF-3) complex.

It localises to the cytoplasm. Its function is as follows. Component of the eukaryotic translation initiation factor 3 (eIF-3) complex, which is involved in protein synthesis of a specialized repertoire of mRNAs and, together with other initiation factors, stimulates binding of mRNA and methionyl-tRNAi to the 40S ribosome. The eIF-3 complex specifically targets and initiates translation of a subset of mRNAs involved in cell proliferation. This Emericella nidulans (strain FGSC A4 / ATCC 38163 / CBS 112.46 / NRRL 194 / M139) (Aspergillus nidulans) protein is Eukaryotic translation initiation factor 3 subunit M.